A 276-amino-acid chain; its full sequence is Pantothenate synthetase (276 aa).

Residue 27–34 (MGALHKGH) coordinates ATP. His-34 functions as the Proton donor in the catalytic mechanism. Residue Gln-58 participates in (R)-pantoate binding. Residue Gln-58 participates in beta-alanine binding. 147–150 (GKKD) provides a ligand contact to ATP. Gln-153 serves as a coordination point for (R)-pantoate. Residues Val-176 and 184-187 (LSSR) each bind ATP.

The protein belongs to the pantothenate synthetase family. As to quaternary structure, homodimer.

It is found in the cytoplasm. It catalyses the reaction (R)-pantoate + beta-alanine + ATP = (R)-pantothenate + AMP + diphosphate + H(+). The protein operates within cofactor biosynthesis; (R)-pantothenate biosynthesis; (R)-pantothenate from (R)-pantoate and beta-alanine: step 1/1. Functionally, catalyzes the condensation of pantoate with beta-alanine in an ATP-dependent reaction via a pantoyl-adenylate intermediate. This Helicobacter pylori (strain ATCC 700392 / 26695) (Campylobacter pylori) protein is Pantothenate synthetase.